Reading from the N-terminus, the 952-residue chain is Glycine dehydrogenase (decarboxylating) (952 aa).

Lysine 703 carries the N6-(pyridoxal phosphate)lysine modification.

Belongs to the GcvP family. The glycine cleavage system is composed of four proteins: P, T, L and H. Requires pyridoxal 5'-phosphate as cofactor.

It carries out the reaction N(6)-[(R)-lipoyl]-L-lysyl-[glycine-cleavage complex H protein] + glycine + H(+) = N(6)-[(R)-S(8)-aminomethyldihydrolipoyl]-L-lysyl-[glycine-cleavage complex H protein] + CO2. Its function is as follows. The glycine cleavage system catalyzes the degradation of glycine. The P protein binds the alpha-amino group of glycine through its pyridoxal phosphate cofactor; CO(2) is released and the remaining methylamine moiety is then transferred to the lipoamide cofactor of the H protein. The sequence is that of Glycine dehydrogenase (decarboxylating) from Mycolicibacterium gilvum (strain PYR-GCK) (Mycobacterium gilvum (strain PYR-GCK)).